Reading from the N-terminus, the 538-residue chain is Aldehyde dehydrogenase family 2 member B4, mitochondrial (538 aa).

A mitochondrion-targeting transit peptide spans 1–38 (MAARRVSSLLSRSFSASSPLLFRSQGRNCYNGGILRRF). Position 282–287 (282–287 (GSTDTG)) interacts with NAD(+). E305 acts as the Proton acceptor in catalysis. Catalysis depends on C339, which acts as the Nucleophile.

Belongs to the aldehyde dehydrogenase family. As to quaternary structure, homotetramer.

It is found in the mitochondrion matrix. It catalyses the reaction an aldehyde + NAD(+) + H2O = a carboxylate + NADH + 2 H(+). Its function is as follows. Possesses activity on acetaldehyde and glycolaldehyde in vitro. This chain is Aldehyde dehydrogenase family 2 member B4, mitochondrial (ALDH2B4), found in Arabidopsis thaliana (Mouse-ear cress).